We begin with the raw amino-acid sequence, 376 residues long: Endo-1,4-beta-xylanase A (376 aa).

The N-terminal stretch at 1–18 is a signal peptide; the sequence is MHLASSLFLLATLPFGFA. The GH10 domain occupies 55–355; the sequence is QRERAGLEDK…HPAYYGVVEA (301 aa). The N-linked (GlcNAc...) asparagine glycan is linked to asparagine 100. Glutamate 170 functions as the Proton donor in the catalytic mechanism. Glutamate 277 serves as the catalytic Nucleophile. Asparagine 358 is a glycosylation site (N-linked (GlcNAc...) asparagine).

This sequence belongs to the glycosyl hydrolase 10 (cellulase F) family.

It localises to the secreted. The enzyme catalyses Endohydrolysis of (1-&gt;4)-beta-D-xylosidic linkages in xylans.. It functions in the pathway glycan degradation; xylan degradation. Partial inhibition of activity is detected in the presence of Ag(+), Cu2(+) and SDS. Like most fungal xylanases, activity is completely inhibited by Hg(2+) since Hg(2+) could interact with tryptophan residues and oxidize the indole ring. Beta-mercaptoethanol enhances the enzymatic activity by counteracting the oxidation effects of the S-S linkage between cysteine residues. Its function is as follows. Endo-1,4-beta-xylanase involved in the hydrolysis of xylan, a major structural heterogeneous polysaccharide found in plant biomass representing the second most abundant polysaccharide in the biosphere, after cellulose. Is most active on birchwood xylan (defined as 100%), moderate on beechwood xylan (96.8%) and soluble wheat arabinoxylan (84.5%), and weak on insoluble wheat arabinoxylan (19.7%). Hydrolyzes substrates into a mixture of xylobiose and xylotriose, but no xylose. No activity was detected in the presence of barley beta-glucan, carboxymethyl cellulose-sodium (CMC-Na), and Avicel. Acts as an alkali-tolerant xylanase, exhibiting 68.8% of the activity at pH 9.0, and even 31.8% at pH 10.0. This chain is Endo-1,4-beta-xylanase A, found in Humicola insolens (Soft-rot fungus).